The chain runs to 111 residues: Ribonuclease P protein component (111 aa).

Belongs to the RnpA family. In terms of assembly, consists of a catalytic RNA component (M1 or rnpB) and a protein subunit.

The catalysed reaction is Endonucleolytic cleavage of RNA, removing 5'-extranucleotides from tRNA precursor.. In terms of biological role, RNaseP catalyzes the removal of the 5'-leader sequence from pre-tRNA to produce the mature 5'-terminus. It can also cleave other RNA substrates such as 4.5S RNA. The protein component plays an auxiliary but essential role in vivo by binding to the 5'-leader sequence and broadening the substrate specificity of the ribozyme. This is Ribonuclease P protein component from Streptococcus thermophilus (strain CNRZ 1066).